Here is a 360-residue protein sequence, read N- to C-terminus: DNA replication and repair protein RecF (360 aa).

An ATP-binding site is contributed by 30 to 37 (GQNGSGKT).

The protein belongs to the RecF family.

The protein resides in the cytoplasm. Its function is as follows. The RecF protein is involved in DNA metabolism; it is required for DNA replication and normal SOS inducibility. RecF binds preferentially to single-stranded, linear DNA. It also seems to bind ATP. This Shewanella putrefaciens (strain CN-32 / ATCC BAA-453) protein is DNA replication and repair protein RecF.